A 698-amino-acid polypeptide reads, in one-letter code: Elongation factor G 2 (698 aa).

In terms of domain architecture, tr-type G spans 8–290; sequence ERYRNIGIMA…AVVDYLPSPV (283 aa). GTP-binding positions include 17 to 24, 88 to 92, and 142 to 145; these read AHIDAGKT, DTPGH, and NKMD.

Belongs to the TRAFAC class translation factor GTPase superfamily. Classic translation factor GTPase family. EF-G/EF-2 subfamily.

Its subcellular location is the cytoplasm. In terms of biological role, catalyzes the GTP-dependent ribosomal translocation step during translation elongation. During this step, the ribosome changes from the pre-translocational (PRE) to the post-translocational (POST) state as the newly formed A-site-bound peptidyl-tRNA and P-site-bound deacylated tRNA move to the P and E sites, respectively. Catalyzes the coordinated movement of the two tRNA molecules, the mRNA and conformational changes in the ribosome. This is Elongation factor G 2 from Methylococcus capsulatus (strain ATCC 33009 / NCIMB 11132 / Bath).